We begin with the raw amino-acid sequence, 332 residues long: Ornithine carbamoyltransferase, catabolic (332 aa).

Carbamoyl phosphate-binding positions include 60-63, Q87, R111, and 138-141; these read STRT and HPTQ. Residues N170, D230, and 234–235 each bind L-ornithine; that span reads SM. Carbamoyl phosphate-binding positions include 271 to 272 and R316; that span reads CL.

It belongs to the aspartate/ornithine carbamoyltransferase superfamily. OTCase family.

It is found in the cytoplasm. It carries out the reaction carbamoyl phosphate + L-ornithine = L-citrulline + phosphate + H(+). It participates in amino-acid degradation; L-arginine degradation via ADI pathway; carbamoyl phosphate from L-arginine: step 2/2. Its function is as follows. Reversibly catalyzes the transfer of the carbamoyl group from carbamoyl phosphate (CP) to the N(epsilon) atom of ornithine (ORN) to produce L-citrulline. In Bacillus cereus (strain ATCC 10987 / NRS 248), this protein is Ornithine carbamoyltransferase, catabolic.